A 436-amino-acid polypeptide reads, in one-letter code: Histidine--tRNA ligase (436 aa).

The protein belongs to the class-II aminoacyl-tRNA synthetase family. As to quaternary structure, homodimer.

Its subcellular location is the cytoplasm. The enzyme catalyses tRNA(His) + L-histidine + ATP = L-histidyl-tRNA(His) + AMP + diphosphate + H(+). This is Histidine--tRNA ligase from Prochlorococcus marinus (strain MIT 9303).